A 261-amino-acid polypeptide reads, in one-letter code: Receptor expression-enhancing protein 4 (261 aa).

A run of 2 helical transmembrane segments spans residues 1 to 21 (MVSW…YPAY) and 35 to 55 (YVRW…ETFT). The tract at residues 177–261 (ELHRRPIGYP…KKPAQSEPEN (85 aa)) is disordered. A compositionally biased stretch (basic and acidic residues) spans 191–202 (ADSDSMDERWSD).

It belongs to the DP1 family. Interacts with microtubules. As to expression, during gastrulation, expressed on the dorsal side of the embryo and then in the neural plate and neural tube. At tailbud stages, expressed in the somites. Expressed in the neural tube later in development.

The protein resides in the endoplasmic reticulum membrane. Functionally, microtubule-binding protein required to ensure proper cell division and nuclear envelope reassembly by sequestering the endoplasmic reticulum away from chromosomes during mitosis. Probably acts by clearing the endoplasmic reticulum membrane from metaphase chromosomes. May play a role in the maintenance of both the nervous system and the musculature. In Xenopus tropicalis (Western clawed frog), this protein is Receptor expression-enhancing protein 4 (reep4).